A 425-amino-acid polypeptide reads, in one-letter code: Proteinase-activated receptor 1 (425 aa).

An N-terminal signal peptide occupies residues 1 to 21 (MGPRRLLLVAACFSLCGPLLS). Positions 22–41 (ARTRARRPESKATNATLDPR) are excised as a propeptide. 3 N-linked (GlcNAc...) asparagine glycosylation sites follow: N35, N62, and N75. At 42–102 (SFLLRNPNDK…SGYLTSSWLT (61 aa)) the chain is on the extracellular side. A helical membrane pass occupies residues 103 to 128 (LFVPSVYTGVFVVSLPLNIMAIVVFI). The Cytoplasmic portion of the chain corresponds to 129–137 (LKMKVKKPA). Residues 138-157 (VVYMLHLATADVLFVSVLPF) form a helical membrane-spanning segment. Over 158 to 176 (KISYYFSGSDWQFGSELCR) the chain is Extracellular. A disulfide bridge connects residues C175 and C254. Residues 177-198 (FVTAAFYCNMYASILLMTVISI) traverse the membrane as a helical segment. Residues 199 to 218 (DRFLAVVYPMQSLSWRTLGR) lie on the Cytoplasmic side of the membrane. Residues 219–239 (ASFTCLAIWALAIAGVVPLLL) form a helical membrane-spanning segment. Residues 240 to 268 (KEQTIQVPGLNITTCHDVLNETLLEGYYA) are Extracellular-facing. N-linked (GlcNAc...) asparagine glycans are attached at residues N250 and N259. A helical transmembrane segment spans residues 269–288 (YYFSAFSAVFFFVPLIISTV). Topologically, residues 289–311 (CYVSIIRCLSSSAVANRSKKSRA) are cytoplasmic. The helical transmembrane segment at 312-334 (LFLSAAVFCIFIICFGPTNVLLI) threads the bilayer. The Extracellular portion of the chain corresponds to 335–350 (AHYSFLSHTSTTEAAY). A helical transmembrane segment spans residues 351 to 374 (FAYLLCVCVSSISCCIDPLIYYYA). At 375–425 (SSECQRYVYSILCCKESSDPSSYNSSGQLMASKMDTCSSNLNNSIYKKLLT) the chain is on the cytoplasmic side. Position 418 is a phosphoserine (S418).

The protein belongs to the G-protein coupled receptor 1 family. In terms of processing, proteolytic cleavage by thrombin generates a new N-terminus that functions as a tethered ligand. Also proteolytically cleaved by cathepsin CTSG. Cleavage at 41-Arg-|-Ser-42 by CTSG results in receptor activation while cleavage at 55-Phe-|-Trp-56 results in inhibition of receptor activation. Phosphorylated in the C-terminal tail; probably mediating desensitization prior to the uncoupling and internalization of the receptor. In terms of tissue distribution, platelets and vascular endothelial cells.

It localises to the cell membrane. In terms of biological role, high affinity receptor that binds the activated thrombin, leading to calcium release from intracellular stores. The thrombin-activated receptor signaling pathway is mediated through PTX-insensitive G proteins, activation of phospholipase C resulting in the production of 1D-myo-inositol 1,4,5-trisphosphate (InsP3) which binds to InsP3 receptors causing calcium release from the stores. In astrocytes, the calcium released into the cytosol allows the Ca(2+)-dependent release of L-glutamate into the synaptic cleft through BEST1, that targets the neuronal postsynaptic GRIN2A/NMDAR receptor resulting in the synaptic plasticity regulation. May play a role in platelets activation and in vascular development. Mediates up-regulation of pro-inflammatory cytokines, such as MCP-1/CCL2 and IL6, triggered by coagulation factor Xa (F10) in cardiac fibroblasts and umbilical vein endothelial cells. The protein is Proteinase-activated receptor 1 of Homo sapiens (Human).